The following is a 155-amino-acid chain: Protein U1 (155 aa).

This sequence belongs to the nanovirus U1 protein family.

In Cicer arietinum (Chickpea), this protein is Protein U1 (DNA-U1).